The chain runs to 206 residues: MINFLALKSSILGDYSSSSKLIDELLAKYTPQQAIITEHDLAEQPLPVLDGEIAMAMRSPEQLNDKQRDALALSDKLISELVASDLLVIAAPMYNFMIPTQLKNWIDLVARAGKTFSYTEQGPQGLISGTRAIIVTTRGGMHKEQGTDQQVPYLKTVLNFMGISDIEVVYAESLAMGPETAELNLEQARKQLSVFTNDISTLNSQS.

FMN-binding positions include S10, 16-18 (SSS), 93-96 (MYNF), and 137-140 (TRGG).

It belongs to the azoreductase type 1 family. Homodimer. FMN serves as cofactor.

The enzyme catalyses 2 a quinone + NADH + H(+) = 2 a 1,4-benzosemiquinone + NAD(+). It catalyses the reaction N,N-dimethyl-1,4-phenylenediamine + anthranilate + 2 NAD(+) = 2-(4-dimethylaminophenyl)diazenylbenzoate + 2 NADH + 2 H(+). In terms of biological role, quinone reductase that provides resistance to thiol-specific stress caused by electrophilic quinones. Functionally, also exhibits azoreductase activity. Catalyzes the reductive cleavage of the azo bond in aromatic azo compounds to the corresponding amines. This is FMN-dependent NADH:quinone oxidoreductase from Psychromonas ingrahamii (strain DSM 17664 / CCUG 51855 / 37).